A 401-amino-acid polypeptide reads, in one-letter code: Argininosuccinate synthase (401 aa).

8–16 provides a ligand contact to ATP; sequence AYSGGLDTS. Tyr85 provides a ligand contact to L-citrulline. ATP is bound at residue Gly115. Residues Thr117, Asn121, and Asp122 each contribute to the L-aspartate site. Residue Asn121 participates in L-citrulline binding. The L-citrulline site is built by Arg125, Ser173, Glu258, and Tyr270.

Belongs to the argininosuccinate synthase family. Type 1 subfamily. In terms of assembly, homotetramer.

Its subcellular location is the cytoplasm. It carries out the reaction L-citrulline + L-aspartate + ATP = 2-(N(omega)-L-arginino)succinate + AMP + diphosphate + H(+). Its pathway is amino-acid biosynthesis; L-arginine biosynthesis; L-arginine from L-ornithine and carbamoyl phosphate: step 2/3. In Staphylococcus aureus (strain bovine RF122 / ET3-1), this protein is Argininosuccinate synthase.